Consider the following 188-residue polypeptide: dCTP deaminase (188 aa).

Residues 111-116, 135-137, Gln-156, Tyr-170, and Gln-180 contribute to the dCTP site; these read KSTYAR and TLE. Glu-137 functions as the Proton donor/acceptor in the catalytic mechanism.

The protein belongs to the dCTP deaminase family. In terms of assembly, homotrimer.

It carries out the reaction dCTP + H2O + H(+) = dUTP + NH4(+). Its pathway is pyrimidine metabolism; dUMP biosynthesis; dUMP from dCTP (dUTP route): step 1/2. Catalyzes the deamination of dCTP to dUTP. In Herminiimonas arsenicoxydans, this protein is dCTP deaminase.